The following is an 842-amino-acid chain: Gamma-aminobutyric acid type B receptor subunit 2 (842 aa).

The N-terminal stretch at 1-17 is a signal peptide; that stretch reads MSRWLSLLLFAVQAVGG. The Extracellular segment spans residues 18 to 438; sequence YEAGEELSCK…TERRREHISS (421 aa). N-linked (GlcNAc...) asparagine glycans are attached at residues Asn-274, Asn-279, Asn-327, and Asn-366. Residues 439 to 459 traverse the membrane as a helical segment; it reads ILFLAMSLLALIGIFLALIFL. Topologically, residues 460-477 are cytoplasmic; the sequence is LINFRYRNHRFIKMSSPN. Residues 478-498 form a helical membrane-spanning segment; it reads LNNIIIAGSICTFASVIMLGL. Residues 499–506 are Extracellular-facing; that stretch reads DTRIVSPD. The helical transmembrane segment at 507 to 527 threads the bilayer; the sequence is VFVWLCYTKTWTLCIGFTLSF. Over 528–556 the chain is Cytoplasmic; sequence GAMFSKTWRVHSIFTNIRMDRKAIKDSKL. A helical transmembrane segment spans residues 557–577; that stretch reads FIILGILLFIDICVLVTWAFV. The Extracellular segment spans residues 578-610; the sequence is SPFSYTVTELPHIPEDNIVIIPEVEKCNSSHSG. N-linked (GlcNAc...) asparagine glycosylation is present at Asn-605. Residues 611 to 631 traverse the membrane as a helical segment; the sequence is VFQAVLYAVKGVLMILGCFLA. At 632 to 647 the chain is on the cytoplasmic side; it reads WETRHVNVPALNDSKY. A helical membrane pass occupies residues 648–668; sequence IGTSVYCCVVMSVLGLSTSVI. Topologically, residues 669-676 are extracellular; that stretch reads LQERVNEM. Residues 677-697 traverse the membrane as a helical segment; it reads FSLASFFVIFSTTLTLCLVFV. Over 698-842 the chain is Cytoplasmic; sequence PKVIELARNP…VDPDEPSTKL (145 aa). Residues 725–740 show a composition bias toward polar residues; sequence AKTSQPMSPQPRSDSS. Disordered stretches follow at residues 725 to 744 and 791 to 842; these read AKTS…GDLI and SPSS…STKL.

Belongs to the G-protein coupled receptor 3 family. In terms of assembly, may form a heterodimer with gbb-1. As to expression, expressed in cholinergic motor neurons.

It is found in the cell membrane. Functionally, component of a heterodimeric G-protein coupled receptor for GABA, formed by gbb-1 and gbb-2. Within the heterodimeric GABA receptor, only gbb-1 seems to bind agonists, while gbb-2 mediates coupling to G proteins. Ligand binding causes a conformation change that triggers signaling via guanine nucleotide-binding proteins (G proteins) and modulates the activity of down-stream effectors, such as adenylate cyclase. Signaling inhibits adenylate cyclase, stimulates phospholipase A2, activates potassium channels, inactivates voltage-dependent calcium-channels and modulates inositol phospholipid hydrolysis. Plays a critical role in the fine-tuning of inhibitory synaptic transmission. Pre-synaptic GABA receptor inhibits neurotransmitter release by down-regulating high-voltage activated calcium channels, whereas postsynaptic GABA receptor decreases neuronal excitability by activating a prominent inwardly rectifying potassium (Kir) conductance that underlies the late inhibitory postsynaptic potentials. Along with gbb-1, may couple to the G(o)-alpha G-protein goa-1 to negatively regulate cholinergic receptor activity in the presence of high levels of acetylcholine in ventral cord motor neurons. As acetylcholine depolarizes body wall muscles, modulation of acetylcholine levels most likely results in the control of locomotory behavior. Regulates locomotory behavior in response to GABA release by GABAergic motor neurons. The protein is Gamma-aminobutyric acid type B receptor subunit 2 of Caenorhabditis elegans.